Consider the following 72-residue polypeptide: uncharacterized protein (72 aa).

Its subcellular location is the host cytoplasm. This is an uncharacterized protein from Enterobacteriaceae (Bacteriophage Mu).